The chain runs to 288 residues: Structure-specific endonuclease subunit SLX1 (288 aa).

One can recognise a GIY-YIG domain in the interval 7 to 90; that stretch reads PFYGVYLLQS…QHPNMTRLIT (84 aa).

It belongs to the SLX1 family. Forms a heterodimer with SLX4. It depends on a divalent metal cation as a cofactor.

Its subcellular location is the nucleus. Its function is as follows. Catalytic subunit of the SLX1-SLX4 structure-specific endonuclease that resolves DNA secondary structures generated during DNA repair and recombination. Has endonuclease activity towards branched DNA substrates, introducing single-strand cuts in duplex DNA close to junctions with ss-DNA. The chain is Structure-specific endonuclease subunit SLX1 from Yarrowia lipolytica (strain CLIB 122 / E 150) (Yeast).